The sequence spans 631 residues: Anthrax toxin receptor-like (631 aa).

The first 27 residues, 1–27, serve as a signal peptide directing secretion; it reads MGSHESLGPYFLVFLLLLLLPPPLFRA. Residues 28–353 are Extracellular-facing; sequence GSLRYHGPDW…TSTTCGIFRN (326 aa). In terms of domain architecture, VWFA spans 76-246; sequence DLYFILDKSG…KALRSTIDAL (171 aa). The a divalent metal cation site is built by serine 84, serine 86, and threonine 150. The helical transmembrane segment at 354–374 threads the bilayer; the sequence is WLYFVPLLLLVPLLLCCVWRL. The Cytoplasmic portion of the chain corresponds to 375-631; that stretch reads CRKQTVKEPP…LSLPPSEPNF (257 aa). A disordered region spans residues 382–413; sequence EPPPVQKPEKEPEQEKPPSPPPPPPPPPPPLP. Residues 388-397 are compositionally biased toward basic and acidic residues; the sequence is KPEKEPEQEK. Positions 398 to 413 are enriched in pro residues; the sequence is PPSPPPPPPPPPPPLP.

The protein belongs to the ATR family.

The protein resides in the membrane. This chain is Anthrax toxin receptor-like (ANTXRL), found in Homo sapiens (Human).